A 1448-amino-acid chain; its full sequence is Murinoglobulin-2 (1448 aa).

The signal sequence occupies residues 1-24 (MWKNREAQLCLFSVLLAFLPSASL). Disulfide bonds link cysteine 48–cysteine 86, cysteine 245–cysteine 277, and cysteine 263–cysteine 289. Asparagine 55 carries N-linked (GlcNAc...) asparagine glycosylation. N-linked (GlcNAc...) asparagine glycans are attached at residues asparagine 295, asparagine 315, asparagine 387, and asparagine 502. 3 disulfides stabilise this stretch: cysteine 462/cysteine 556, cysteine 588/cysteine 748, and cysteine 636/cysteine 681. Positions 678-709 (PTYCYDLPKEPPRKDPPRKDPEPKDTVVETIR) are bait region. 2 N-linked (GlcNAc...) asparagine glycosylation sites follow: asparagine 751 and asparagine 846. 4 disulfide bridges follow: cysteine 824/cysteine 860, cysteine 898/cysteine 1295, cysteine 1056/cysteine 1101, and cysteine 1326/cysteine 1441. The segment at residues 949 to 952 (CGEQ) is a cross-link (isoglutamyl cysteine thioester (Cys-Gln)). N-linked (GlcNAc...) asparagine glycosylation is present at asparagine 968. Residues asparagine 1114, asparagine 1285, and asparagine 1398 are each glycosylated (N-linked (GlcNAc...) asparagine).

It belongs to the protease inhibitor I39 (alpha-2-macroglobulin) family. In terms of assembly, monomer.

It is found in the secreted. In terms of biological role, a proteinase activates the inhibitor by specific proteolysis in the bait region, which, by an unknown mechanism leads to reaction at the cysteinyl-glutamyl internal thiol ester site and to a conformational change, whereby the proteinase is trapped and/or covalently bound to the inhibitor. While in the tetrameric proteinase inhibitors steric inhibition is sufficiently strong, monomeric forms need a covalent linkage between the activated glutamyl residue of the original thiol ester and a terminal amino group of a lysine or another nucleophilic group on the proteinase, for inhibition to be effective. This chain is Murinoglobulin-2, found in Rattus norvegicus (Rat).